The following is a 367-amino-acid chain: tRNA 2-selenouridine synthase (367 aa).

Residues 12–135 (FLSGVAMLDV…MRGFLIETTD (124 aa)) enclose the Rhodanese domain. The S-selanylcysteine intermediate role is filled by Cys-95.

Belongs to the SelU family. Monomer.

It carries out the reaction 5-methylaminomethyl-2-thiouridine(34) in tRNA + selenophosphate + (2E)-geranyl diphosphate + H2O + H(+) = 5-methylaminomethyl-2-selenouridine(34) in tRNA + (2E)-thiogeraniol + phosphate + diphosphate. The enzyme catalyses 5-methylaminomethyl-2-thiouridine(34) in tRNA + (2E)-geranyl diphosphate = 5-methylaminomethyl-S-(2E)-geranyl-thiouridine(34) in tRNA + diphosphate. It catalyses the reaction 5-methylaminomethyl-S-(2E)-geranyl-thiouridine(34) in tRNA + selenophosphate + H(+) = 5-methylaminomethyl-2-(Se-phospho)selenouridine(34) in tRNA + (2E)-thiogeraniol. The catalysed reaction is 5-methylaminomethyl-2-(Se-phospho)selenouridine(34) in tRNA + H2O = 5-methylaminomethyl-2-selenouridine(34) in tRNA + phosphate. Involved in the post-transcriptional modification of the uridine at the wobble position (U34) of tRNA(Lys), tRNA(Glu) and tRNA(Gln). Catalyzes the conversion of 2-thiouridine (S2U-RNA) to 2-selenouridine (Se2U-RNA). Acts in a two-step process involving geranylation of 2-thiouridine (S2U) to S-geranyl-2-thiouridine (geS2U) and subsequent selenation of the latter derivative to 2-selenouridine (Se2U) in the tRNA chain. The protein is tRNA 2-selenouridine synthase of Cupriavidus necator (strain ATCC 17699 / DSM 428 / KCTC 22496 / NCIMB 10442 / H16 / Stanier 337) (Ralstonia eutropha).